Consider the following 322-residue polypeptide: Glycerol-3-phosphate dehydrogenase [NAD(P)+] (322 aa).

4 residues coordinate NADPH: W11, R31, R32, and K101. 2 residues coordinate sn-glycerol 3-phosphate: K101 and G130. Position 134 (A134) interacts with NADPH. Sn-glycerol 3-phosphate-binding residues include K184, D237, S247, R248, and N249. K184 functions as the Proton acceptor in the catalytic mechanism. Position 248 (R248) interacts with NADPH. V270 and E272 together coordinate NADPH.

It belongs to the NAD-dependent glycerol-3-phosphate dehydrogenase family.

It is found in the cytoplasm. It carries out the reaction sn-glycerol 3-phosphate + NAD(+) = dihydroxyacetone phosphate + NADH + H(+). The enzyme catalyses sn-glycerol 3-phosphate + NADP(+) = dihydroxyacetone phosphate + NADPH + H(+). It participates in membrane lipid metabolism; glycerophospholipid metabolism. Catalyzes the reduction of the glycolytic intermediate dihydroxyacetone phosphate (DHAP) to sn-glycerol 3-phosphate (G3P), the key precursor for phospholipid synthesis. The polypeptide is Glycerol-3-phosphate dehydrogenase [NAD(P)+] (Thermus thermophilus (strain ATCC BAA-163 / DSM 7039 / HB27)).